The sequence spans 320 residues: uncharacterized protein (320 aa).

The protein to S.pombe SpAC23H3.12c.

This is an uncharacterized protein from Saccharomyces cerevisiae (strain ATCC 204508 / S288c) (Baker's yeast).